A 1726-amino-acid polypeptide reads, in one-letter code: Transcription elongation factor SPT6 (1726 aa).

3 stretches are compositionally biased toward acidic residues: residues 1–18 (MSDFIESEAEESEEEFEE), 31–45 (EEDEEEEEENTEDQD), and 55–79 (DDDDVEEEEEEERGEPPAGEDSDSG). 3 disordered regions span residues 1–196 (MSDF…KGKK), 219–248 (AEFDTEAYDHAEEEEEDQDDESWDRPKKQT), and 482–512 (EVSEEDGEEAEVEEEEEEEEQKGPDLKQASR). Serine 90 carries the phosphoserine modification. Residues 93–104 (DYLDDDDLDLIE) show a composition bias toward acidic residues. Over residues 110 to 120 (KVKRRKKKYSR) the composition is skewed to basic residues. Acidic residues-rich tracts occupy residues 146–157 (GDGEGEVEDGEA), 166–186 (DEEEEDDEESDIDDFIVDDDG), 219–240 (AEFDTEAYDHAEEEEEDQDDES), and 484–501 (SEEDGEEAEVEEEEEEEE). Positions 502–512 (QKGPDLKQASR) are enriched in basic and acidic residues. The stretch at 806–865 (LKRRNAWREDEREKKQQDVENLKKFLLSKKPHVVAVSGENRDAHMVMEDIKRTISELEQN) forms a coiled coil. The 70-residue stretch at 1204–1273 (WNHFDSGSCP…EKFNVDLTCR (70 aa)) folds into the S1 motif domain. The SH2 domain occupies 1316-1426 (YIKRVIAHPS…LLGHKYFHEC (111 aa)). Position 1522 is a phosphothreonine (threonine 1522). A Phosphoserine modification is found at serine 1525. Residues 1611 to 1627 (LMTPSYSYTTPGQQQAM) show a composition bias toward polar residues. The disordered stretch occupies residues 1611–1726 (LMTPSYSYTT…ATPLLDEMDR (116 aa)). 2 stretches are compositionally biased toward low complexity: residues 1628 to 1640 (TTPQYPSSTPQSS) and 1647 to 1656 (SSSTPSSSSS). Positions 1657 to 1669 (RVRTPQPKASSHT) are enriched in polar residues.

This sequence belongs to the SPT6 family.

It localises to the nucleus. In terms of biological role, histone H3-H4 chaperone that plays a role in maintenance of chromatin structure during RNA polymerase II transcription elongation. Promotes the activation of the myogenic gene program by entailing erasure of the repressive H3K27me3 epigenetic mark through stabilization of the chromatin interaction of the H3K27 demethylase KDM6A. Plays an important role during early patterning and somitogenesis of the embryo. The polypeptide is Transcription elongation factor SPT6 (supt6h) (Danio rerio (Zebrafish)).